Here is a 165-residue protein sequence, read N- to C-terminus: Urease accessory protein UreE (165 aa).

Residues Glu137–His156 are disordered.

Belongs to the UreE family.

It localises to the cytoplasm. Functionally, involved in urease metallocenter assembly. Binds nickel. Probably functions as a nickel donor during metallocenter assembly. The polypeptide is Urease accessory protein UreE (Pseudomonas putida (strain GB-1)).